Reading from the N-terminus, the 376-residue chain is Carbamoyl phosphate synthase small chain (376 aa).

The segment at 1–184 is CPSase; the sequence is MKAILALADG…SEGYQQQTGE (184 aa). Positions 45, 236, and 238 each coordinate L-glutamine. In terms of domain architecture, Glutamine amidotransferase type-1 spans 188 to 374; that stretch reads KVVAYDFGIK…ADLMEKNRQS (187 aa). Cysteine 263 functions as the Nucleophile in the catalytic mechanism. Leucine 264, glutamine 267, asparagine 305, glycine 307, and phenylalanine 308 together coordinate L-glutamine. Catalysis depends on residues histidine 347 and glutamate 349.

This sequence belongs to the CarA family. Composed of two chains; the small (or glutamine) chain promotes the hydrolysis of glutamine to ammonia, which is used by the large (or ammonia) chain to synthesize carbamoyl phosphate. Tetramer of heterodimers (alpha,beta)4.

It carries out the reaction hydrogencarbonate + L-glutamine + 2 ATP + H2O = carbamoyl phosphate + L-glutamate + 2 ADP + phosphate + 2 H(+). The enzyme catalyses L-glutamine + H2O = L-glutamate + NH4(+). The protein operates within amino-acid biosynthesis; L-arginine biosynthesis; carbamoyl phosphate from bicarbonate: step 1/1. Its pathway is pyrimidine metabolism; UMP biosynthesis via de novo pathway; (S)-dihydroorotate from bicarbonate: step 1/3. In terms of biological role, small subunit of the glutamine-dependent carbamoyl phosphate synthetase (CPSase). CPSase catalyzes the formation of carbamoyl phosphate from the ammonia moiety of glutamine, carbonate, and phosphate donated by ATP, constituting the first step of 2 biosynthetic pathways, one leading to arginine and/or urea and the other to pyrimidine nucleotides. The small subunit (glutamine amidotransferase) binds and cleaves glutamine to supply the large subunit with the substrate ammonia. This Syntrophotalea carbinolica (strain DSM 2380 / NBRC 103641 / GraBd1) (Pelobacter carbinolicus) protein is Carbamoyl phosphate synthase small chain.